We begin with the raw amino-acid sequence, 121 residues long: Large ribosomal subunit protein uL18 (121 aa).

This sequence belongs to the universal ribosomal protein uL18 family. As to quaternary structure, part of the 50S ribosomal subunit; part of the 5S rRNA/L5/L18/L25 subcomplex. Contacts the 5S and 23S rRNAs.

In terms of biological role, this is one of the proteins that bind and probably mediate the attachment of the 5S RNA into the large ribosomal subunit, where it forms part of the central protuberance. The chain is Large ribosomal subunit protein uL18 from Anaplasma phagocytophilum (strain HZ).